The chain runs to 459 residues: Bifunctional protein GlmU (459 aa).

The pyrophosphorylase stretch occupies residues 1–229 (MSNFAIILAA…FDESLGVNDR (229 aa)). UDP-N-acetyl-alpha-D-glucosamine contacts are provided by residues 8-11 (LAAG), Lys-22, Gln-72, and 77-78 (GT). Asp-102 lines the Mg(2+) pocket. 4 residues coordinate UDP-N-acetyl-alpha-D-glucosamine: Gly-139, Glu-154, Asn-169, and Asn-227. Asn-227 is a Mg(2+) binding site. The segment at 230–250 (VALATAESVMRRRINHKHMVN) is linker. The tract at residues 251–459 (GVSFVNPEAT…TRLPHHPKNQ (209 aa)) is N-acetyltransferase. UDP-N-acetyl-alpha-D-glucosamine is bound by residues Arg-332 and Lys-350. His-362 (proton acceptor) is an active-site residue. UDP-N-acetyl-alpha-D-glucosamine is bound by residues Tyr-365 and Asn-376. Acetyl-CoA-binding positions include Ala-379, 385–386 (NY), Ser-404, Ala-422, and Arg-439.

The protein in the N-terminal section; belongs to the N-acetylglucosamine-1-phosphate uridyltransferase family. This sequence in the C-terminal section; belongs to the transferase hexapeptide repeat family. As to quaternary structure, homotrimer. It depends on Mg(2+) as a cofactor.

It localises to the cytoplasm. It carries out the reaction alpha-D-glucosamine 1-phosphate + acetyl-CoA = N-acetyl-alpha-D-glucosamine 1-phosphate + CoA + H(+). The enzyme catalyses N-acetyl-alpha-D-glucosamine 1-phosphate + UTP + H(+) = UDP-N-acetyl-alpha-D-glucosamine + diphosphate. It participates in nucleotide-sugar biosynthesis; UDP-N-acetyl-alpha-D-glucosamine biosynthesis; N-acetyl-alpha-D-glucosamine 1-phosphate from alpha-D-glucosamine 6-phosphate (route II): step 2/2. Its pathway is nucleotide-sugar biosynthesis; UDP-N-acetyl-alpha-D-glucosamine biosynthesis; UDP-N-acetyl-alpha-D-glucosamine from N-acetyl-alpha-D-glucosamine 1-phosphate: step 1/1. It functions in the pathway bacterial outer membrane biogenesis; LPS lipid A biosynthesis. Its function is as follows. Catalyzes the last two sequential reactions in the de novo biosynthetic pathway for UDP-N-acetylglucosamine (UDP-GlcNAc). The C-terminal domain catalyzes the transfer of acetyl group from acetyl coenzyme A to glucosamine-1-phosphate (GlcN-1-P) to produce N-acetylglucosamine-1-phosphate (GlcNAc-1-P), which is converted into UDP-GlcNAc by the transfer of uridine 5-monophosphate (from uridine 5-triphosphate), a reaction catalyzed by the N-terminal domain. The protein is Bifunctional protein GlmU of Streptococcus pneumoniae (strain 70585).